The chain runs to 130 residues: Protein 7.7 (130 aa).

In Escherichia phage T7 (Bacteriophage T7), this protein is Protein 7.7.